A 98-amino-acid chain; its full sequence is NADH-ubiquinone oxidoreductase chain 4L (98 aa).

Transmembrane regions (helical) follow at residues 1–21, 29–49, and 61–81; these read MSMV…GLLV, SLLC…MAIL, and IILL…LVMV.

The protein belongs to the complex I subunit 4L family. Core subunit of respiratory chain NADH dehydrogenase (Complex I) which is composed of 45 different subunits.

It is found in the mitochondrion inner membrane. It catalyses the reaction a ubiquinone + NADH + 5 H(+)(in) = a ubiquinol + NAD(+) + 4 H(+)(out). Core subunit of the mitochondrial membrane respiratory chain NADH dehydrogenase (Complex I) which catalyzes electron transfer from NADH through the respiratory chain, using ubiquinone as an electron acceptor. Part of the enzyme membrane arm which is embedded in the lipid bilayer and involved in proton translocation. The protein is NADH-ubiquinone oxidoreductase chain 4L (MT-ND4L) of Lynx canadensis (Canada lynx).